A 302-amino-acid polypeptide reads, in one-letter code: Acetyl-coenzyme A carboxylase carboxyl transferase subunit beta (302 aa).

Residues 25 to 294 (VWTKCDSCGQ…PQEDIVTEAA (270 aa)) enclose the CoA carboxyltransferase N-terminal domain. The Zn(2+) site is built by Cys29, Cys32, Cys48, and Cys51. A C4-type zinc finger spans residues 29–51 (CDSCGQVLYRAELERNLEVCPKC).

This sequence belongs to the AccD/PCCB family. In terms of assembly, acetyl-CoA carboxylase is a heterohexamer composed of biotin carboxyl carrier protein (AccB), biotin carboxylase (AccC) and two subunits each of ACCase subunit alpha (AccA) and ACCase subunit beta (AccD). The cofactor is Zn(2+).

The protein localises to the cytoplasm. It carries out the reaction N(6)-carboxybiotinyl-L-lysyl-[protein] + acetyl-CoA = N(6)-biotinyl-L-lysyl-[protein] + malonyl-CoA. It functions in the pathway lipid metabolism; malonyl-CoA biosynthesis; malonyl-CoA from acetyl-CoA: step 1/1. In terms of biological role, component of the acetyl coenzyme A carboxylase (ACC) complex. Biotin carboxylase (BC) catalyzes the carboxylation of biotin on its carrier protein (BCCP) and then the CO(2) group is transferred by the transcarboxylase to acetyl-CoA to form malonyl-CoA. In Erwinia tasmaniensis (strain DSM 17950 / CFBP 7177 / CIP 109463 / NCPPB 4357 / Et1/99), this protein is Acetyl-coenzyme A carboxylase carboxyl transferase subunit beta.